The following is a 534-amino-acid chain: NAD(P)H-quinone oxidoreductase chain 4 1 (534 aa).

A run of 14 helical transmembrane segments spans residues 6-26 (IPWL…IPLI), 34-54 (IRWY…TAFW), 87-107 (LSMP…LAAW), 113-133 (PKLF…VFAV), 136-156 (LLLF…LISI), 169-189 (FILY…ALAF), 209-229 (ALEL…LPIF), 243-263 (SAPV…YGLI), 277-297 (FAPL…LTAF), 311-331 (ISHM…GMNG), 332-352 (AVLQ…LSGV), 376-396 (FAMF…SGFV), 418-438 (IAIF…LSML), and 464-484 (IFVA…PKLA).

It belongs to the complex I subunit 4 family.

It localises to the cellular thylakoid membrane. It carries out the reaction a plastoquinone + NADH + (n+1) H(+)(in) = a plastoquinol + NAD(+) + n H(+)(out). It catalyses the reaction a plastoquinone + NADPH + (n+1) H(+)(in) = a plastoquinol + NADP(+) + n H(+)(out). NDH-1 shuttles electrons from NAD(P)H, via FMN and iron-sulfur (Fe-S) centers, to quinones in the respiratory chain. The immediate electron acceptor for the enzyme in this species is believed to be plastoquinone. Couples the redox reaction to proton translocation (for every two electrons transferred, four hydrogen ions are translocated across the cytoplasmic membrane), and thus conserves the redox energy in a proton gradient. The polypeptide is NAD(P)H-quinone oxidoreductase chain 4 1 (Picosynechococcus sp. (strain ATCC 27264 / PCC 7002 / PR-6) (Agmenellum quadruplicatum)).